The primary structure comprises 558 residues: MELRARGWWLLCAAAALVACTRGDPASKSRSCSEVRQIYGAKGFSLSDVPQAEISGEHLRICPQGYTCCTSEMEENLANHSRMELETALHDSSRALQATLATQLHGIDDHFQRLLNDSERTLQDAFPGAFGDLYTQNTRAFRDLYAELRLYYRGANLHLEETLAEFWARLLERLFKQLHPQLLLPDDYLDCLGKQAEALRPFGDAPRELRLRATRAFVAARSFVQGLGVASDVVRKVAQVPLAPECSRAVMKLVYCAHCRGVPGARPCPDYCRNVLKGCLANQADLDAEWRNLLDSMVLITDKFWGPSGAEYVIGSVHMWLAEAINALQDNKDTLTAKVIQGCGNPKVNPHGSGPEEKRRRAKLALQEKSSTGTLEKLVSEAKAQLRDIQDYWISLPGTLCSEKMAMSPASDDRCWNGISKGRYLPEVMGDGLANQINNPEVEVDITKPDMTIRQQIMQLKIMTNRLRGAYGGNDVDFQDASDDGSGSGSGGGCPDDACGRRVSKKSSSSRTPLIHALPGLSEQEGQKTSAATRPEPHYFFLLFLFTLVLAAARPRWR.

Residues 1-23 (MELRARGWWLLCAAAALVACTRG) form the signal peptide. Disulfide bonds link cysteine 32/cysteine 68, cysteine 62/cysteine 256, cysteine 69/cysteine 259, cysteine 191/cysteine 343, cysteine 246/cysteine 279, cysteine 268/cysteine 415, and cysteine 272/cysteine 401. Asparagine 79 and asparagine 116 each carry an N-linked (GlcNAc...) asparagine glycan. Residues 478-531 (FQDASDDGSGSGSGGGCPDDACGRRVSKKSSSSRTPLIHALPGLSEQEGQKTSA) are disordered. O-linked (Xyl...) (heparan sulfate) serine glycosylation is found at serine 486, serine 488, and serine 490. Residue serine 530 is the site of GPI-anchor amidated serine attachment. Positions 531 to 558 (AATRPEPHYFFLLFLFTLVLAAARPRWR) are cleaved as a propeptide — removed in mature form.

Belongs to the glypican family. In terms of processing, S-nitrosylated in a Cu(2+)-dependent manner. Nitric acid (NO) is released from the nitrosylated cysteines by ascorbate or by some other reducing agent, in a Cu(2+) or Zn(2+) dependent manner. This free nitric oxide is then capable of cleaving the heparan sulfate side chains. N- and O-glycosylated. N-glycosylation is mainly of the complex type containing sialic acid. O-glycosylated with heparan sulfate. The heparan sulfate chains can be cleaved either by the action of heparanase or, degraded by a deaminative process that uses nitric oxide (NO) released from the S-nitrosylated cysteines. This process is triggered by ascorbate, or by some other reducing agent, in a Cu(2+)- or Zn(2+) dependent manner. Cu(2+) ions are provided by ceruloproteins such as APP, PRNP or CP which associate with GCP1 in intracellular compartments or lipid rafts. Post-translationally, this cell-associated glypican is further processed to give rise to a medium-released species. In terms of tissue distribution, nervous system.

Its subcellular location is the cell membrane. The protein localises to the endosome. The protein resides in the secreted. It localises to the extracellular space. Its function is as follows. Cell surface proteoglycan that bears heparan sulfate. May act as a catalyst in increasing the rate of conversion of prion protein PRPN(C) to PRNP(Sc) via associating (via the heparan sulfate side chains) with both forms of PRPN, targeting them to lipid rafts and facilitating their interaction. Required for proper skeletal muscle differentiation by sequestering FGF2 in lipid rafts preventing its binding to receptors (FGFRs) and inhibiting the FGF-mediated signaling. Binds Cu(2+) or Zn(2+) ions. Binds, via the heparan sulfate side chains, alpha-4 (V) collagen and participates in Schwann cell myelination. This Rattus norvegicus (Rat) protein is Glypican-1 (Gpc1).